The chain runs to 87 residues: Small ribosomal subunit protein uS17 (87 aa).

The protein belongs to the universal ribosomal protein uS17 family. Part of the 30S ribosomal subunit.

Functionally, one of the primary rRNA binding proteins, it binds specifically to the 5'-end of 16S ribosomal RNA. The protein is Small ribosomal subunit protein uS17 of Bacillus cytotoxicus (strain DSM 22905 / CIP 110041 / 391-98 / NVH 391-98).